A 317-amino-acid polypeptide reads, in one-letter code: MPMQGAQRRLLGSLNSTPTATPNLGLAANHTGAPCLEVSIPDGLFLSLGLVSLVENVLVVAAIAKNRNLHSPMYCFICCLALSDLLVSGSNMLEMAVILLLEAGALATRASVVQQLQNTIDVLTCSSMLCSLCFLGAIAVDRYVSIFYALRYHSIVTLPRARRAIAAIWVASVLSSTLFIAYCDHAAVLLCLVVFFLAMLVLMAVLYVHMLARACQHAQGITRLHKRQLPAHQGFGLRGAATLTILLGIFFVCWGPFFLHLMLVVLCPQHLTCSCIFKNFKVFLTLIICNTIIDPLIYAFRSQELCRTLKEVLLCSW.

The Extracellular segment spans residues 1-37 (MPMQGAQRRLLGSLNSTPTATPNLGLAANHTGAPCLE). A glycan (N-linked (GlcNAc...) asparagine) is linked at Asn-29. The chain crosses the membrane as a helical span at residues 38-63 (VSIPDGLFLSLGLVSLVENVLVVAAI). Over 64-72 (AKNRNLHSP) the chain is Cytoplasmic. A helical transmembrane segment spans residues 73-93 (MYCFICCLALSDLLVSGSNML). The Extracellular segment spans residues 94–118 (EMAVILLLEAGALATRASVVQQLQN). A helical membrane pass occupies residues 119 to 140 (TIDVLTCSSMLCSLCFLGAIAV). The Cytoplasmic portion of the chain corresponds to 141 to 163 (DRYVSIFYALRYHSIVTLPRARR). A helical membrane pass occupies residues 164 to 183 (AIAAIWVASVLSSTLFIAYC). The Extracellular segment spans residues 184 to 191 (DHAAVLLC). Residues 192-211 (LVVFFLAMLVLMAVLYVHML) form a helical membrane-spanning segment. The Cytoplasmic segment spans residues 212 to 240 (ARACQHAQGITRLHKRQLPAHQGFGLRGA). The helical transmembrane segment at 241–266 (ATLTILLGIFFVCWGPFFLHLMLVVL) threads the bilayer. The Extracellular segment spans residues 267–279 (CPQHLTCSCIFKN). Residues 280–300 (FKVFLTLIICNTIIDPLIYAF) traverse the membrane as a helical segment. Residues 301–317 (RSQELCRTLKEVLLCSW) lie on the Cytoplasmic side of the membrane. A lipid anchor (S-palmitoyl cysteine) is attached at Cys-315.

This sequence belongs to the G-protein coupled receptor 1 family. As to quaternary structure, interacts with MGRN1, but does not undergo MGRN1-mediated ubiquitination; this interaction competes with GNAS-binding and thus inhibits agonist-induced cAMP production. Interacts with OPN3; the interaction results in a decrease in MC1R-mediated cAMP signaling and ultimately a decrease in melanin production in melanocytes.

The protein localises to the cell membrane. Its function is as follows. Receptor for MSH (alpha, beta and gamma) and ACTH. The activity of this receptor is mediated by G proteins which activate adenylate cyclase. Mediates melanogenesis, the production of eumelanin (black/brown) and phaeomelanin (red/yellow), via regulation of cAMP signaling in melanocytes. This Alouatta sara (Bolivian red howler monkey) protein is Melanocyte-stimulating hormone receptor (MC1R).